The primary structure comprises 476 residues: Glycogen synthase (476 aa).

Lysine 15 contributes to the ADP-alpha-D-glucose binding site.

The protein belongs to the glycosyltransferase 1 family. Bacterial/plant glycogen synthase subfamily.

It catalyses the reaction [(1-&gt;4)-alpha-D-glucosyl](n) + ADP-alpha-D-glucose = [(1-&gt;4)-alpha-D-glucosyl](n+1) + ADP + H(+). It functions in the pathway glycan biosynthesis; glycogen biosynthesis. Synthesizes alpha-1,4-glucan chains using ADP-glucose. The chain is Glycogen synthase from Streptococcus equi subsp. equi (strain 4047).